We begin with the raw amino-acid sequence, 306 residues long: Aspartate carbamoyltransferase catalytic subunit (306 aa).

2 residues coordinate carbamoyl phosphate: arginine 55 and threonine 56. Lysine 84 provides a ligand contact to L-aspartate. Arginine 105, histidine 133, and glutamine 136 together coordinate carbamoyl phosphate. 2 residues coordinate L-aspartate: arginine 166 and arginine 227. Carbamoyl phosphate-binding residues include leucine 265 and proline 266.

The protein belongs to the aspartate/ornithine carbamoyltransferase superfamily. ATCase family. Heterododecamer (2C3:3R2) of six catalytic PyrB chains organized as two trimers (C3), and six regulatory PyrI chains organized as three dimers (R2).

The enzyme catalyses carbamoyl phosphate + L-aspartate = N-carbamoyl-L-aspartate + phosphate + H(+). The protein operates within pyrimidine metabolism; UMP biosynthesis via de novo pathway; (S)-dihydroorotate from bicarbonate: step 2/3. Its function is as follows. Catalyzes the condensation of carbamoyl phosphate and aspartate to form carbamoyl aspartate and inorganic phosphate, the committed step in the de novo pyrimidine nucleotide biosynthesis pathway. This chain is Aspartate carbamoyltransferase catalytic subunit, found in Neisseria gonorrhoeae (strain ATCC 700825 / FA 1090).